A 305-amino-acid polypeptide reads, in one-letter code: MVTATHSQSSVGRLRHLARQYAALTKPRVTQLAVFCAIIGMFLATPGMVPWSVLIGGAAGIWLLAGAAFAINCLVEQKIDALMRRTAWRPSATGEITTTQTLIFSAVLGGAGMWLLHVFANDLTMWLTFATFLGYAVVYTILLKPATPQNIVIGGLSGAMPPALGWSAVSGTVPAEAWFLVLIIFTWTPPHFWALALYRRADYAKSGLPMLPITHGERYTLLHILLYTLIMIAATLLPFVYGMSGYIYLVAALGLGLVFLGYAWKLYRNYSDGLAQRTFRYSILYLSLLFAVLLVDHYFKFVPQV.

9 consecutive transmembrane segments (helical) span residues 29-49 (VTQLAVFCAIIGMFLATPGMV), 51-71 (WSVLIGGAAGIWLLAGAAFAI), 101-121 (TLIFSAVLGGAGMWLLHVFAN), 123-143 (LTMWLTFATFLGYAVVYTILL), 151-171 (IVIGGLSGAMPPALGWSAVSG), 177-197 (AWFLVLIIFTWTPPHFWALAL), 221-241 (LLHILLYTLIMIAATLLPFVY), 244-264 (SGYIYLVAALGLGLVFLGYAW), and 283-303 (ILYLSLLFAVLLVDHYFKFVP).

It belongs to the UbiA prenyltransferase family. Protoheme IX farnesyltransferase subfamily.

It is found in the cell inner membrane. It carries out the reaction heme b + (2E,6E)-farnesyl diphosphate + H2O = Fe(II)-heme o + diphosphate. It functions in the pathway porphyrin-containing compound metabolism; heme O biosynthesis; heme O from protoheme: step 1/1. In terms of biological role, converts heme B (protoheme IX) to heme O by substitution of the vinyl group on carbon 2 of heme B porphyrin ring with a hydroxyethyl farnesyl side group. This is Protoheme IX farnesyltransferase from Cupriavidus metallidurans (strain ATCC 43123 / DSM 2839 / NBRC 102507 / CH34) (Ralstonia metallidurans).